We begin with the raw amino-acid sequence, 388 residues long: (S)-8-oxocitronellyl enol synthase ISY1 (388 aa).

Residues 35 to 37 (TGI), 63 to 64 (RR), 81 to 82 (DV), 105 to 106 (TW), and glutamine 143 contribute to the NADP(+) site. Catalysis depends on residues lysine 147 and tyrosine 178. NADP(+) contacts are provided by residues tyrosine 178, isoleucine 205, and 212-214 (SMM).

This sequence belongs to the short-chain dehydrogenases/reductases (SDR) family.

It catalyses the reaction (S)-8-oxocitronellyl enol + NADP(+) = (6E)-8-oxogeranial + NADPH + H(+). The enzyme catalyses (S)-8-oxocitronellyl enol + NAD(+) = (6E)-8-oxogeranial + NADH + H(+). In terms of biological role, iridoid synthase that catalyzes the first step in generation of the iridoid ring scaffold using the linear monoterpene (6E)-8-oxogeranial as substrate. Iridoids comprise a large family of distinctive bicyclic monoterpenes that possess a wide range of pharmacological activities, including anticancer, anti-inflammatory, antifungal and antibacterial activities. Catalyzes the conversion of the linear monoterpene (6E)-8-oxogeranial to (S)-8-oxocitronellyl enol, a precursor of nepetalactones, which are metabolites that are both insect-repellent and have euphoric effect in cats. The chain is (S)-8-oxocitronellyl enol synthase ISY1 from Nepeta racemosa (Catmint).